The primary structure comprises 134 residues: Small ribosomal subunit protein uS11 (134 aa).

It belongs to the universal ribosomal protein uS11 family. As to quaternary structure, part of the 30S ribosomal subunit. Interacts with proteins S7 and S18. Binds to IF-3.

Located on the platform of the 30S subunit, it bridges several disparate RNA helices of the 16S rRNA. Forms part of the Shine-Dalgarno cleft in the 70S ribosome. This Herminiimonas arsenicoxydans protein is Small ribosomal subunit protein uS11.